Consider the following 804-residue polypeptide: Tubulin polyglutamylase TTLL13 (804 aa).

Positions 1-41 (MEPNNCKTSESEEDDIEEEESEEECVREESTTPNSTQQALR) are disordered. Positions 4-30 (NNCKTSESEEDDIEEEESEEECVREES) form a coiled coil. Acidic residues predominate over residues 11 to 26 (SEEDDIEEEESEEECV). The TTL domain maps to 85 to 430 (RRPLAINLTN…RGCDKKKVIE (346 aa)). ATP-binding positions include lysine 202, 208 to 209 (QG), 230 to 233 (QQYI), and 243 to 245 (KFD). Glutamine 208 is an a protein binding site. Arginine 269 is a binding site for L-glutamate. 291-292 (TN) is an ATP binding site. Tyrosine 293 and lysine 311 together coordinate L-glutamate. Residues aspartate 376, glutamate 389, and asparagine 391 each coordinate Mg(2+). Histidine 392 lines the a protein pocket. A c-MTBD region region spans residues 401 to 482 (RLDREVKDAL…LGGYRRIYPG (82 aa)). Lysine 407 contributes to the L-glutamate binding site. Coiled-coil stretches lie at residues 504 to 541 (ASKA…KEQN) and 585 to 609 (QDIV…IRSL). The disordered stretch occupies residues 519 to 556 (IRLKQEQQENPGTKKRKENKEQNQGESAGEKSRSRTAT). The segment covering 536–551 (ENKEQNQGESAGEKSR) has biased composition (basic and acidic residues).

The protein belongs to the tubulin--tyrosine ligase family. The cofactor is Mg(2+). Highly expressed in heart and testis. Expressed in brain, kidney, liver, lung, muscle and trachea. In the brain, expressed in ependymal cilia, cortex, corpus callosum and striatum.

It carries out the reaction (L-glutamyl)(n)-gamma-L-glutamyl-L-glutamyl-[protein] + L-glutamate + ATP = (L-glutamyl)(n+1)-gamma-L-glutamyl-L-glutamyl-[protein] + ADP + phosphate + H(+). Its function is as follows. Polyglutamylase which modifies tubulin, generating polyglutamate side chains of variable lengths on the gamma-carboxyl group of specific glutamate residues within the C-terminal tail of tubulin. Mediates ATP-dependent polyglutamate side-chain elongation of the polyglutamylation reaction but not the initiation step. Preferentially modifies the alpha-tubulin tail over a beta-tail. The protein is Tubulin polyglutamylase TTLL13 of Mus musculus (Mouse).